A 428-amino-acid chain; its full sequence is UPF0229 protein YeaH (428 aa).

Residues Gly78–Arg90 show a composition bias toward basic and acidic residues. The tract at residues Gly78 to Glu111 is disordered. The span at Gln92–Gln103 shows a compositional bias: gly residues.

This sequence belongs to the UPF0229 family.

This Salmonella enteritidis PT4 (strain P125109) protein is UPF0229 protein YeaH.